Consider the following 156-residue polypeptide: ATP synthase subunit b (156 aa).

A helical membrane pass occupies residues 7–27 (LIGELIAFTVFVLFCMKFVWP).

It belongs to the ATPase B chain family. In terms of assembly, F-type ATPases have 2 components, F(1) - the catalytic core - and F(0) - the membrane proton channel. F(1) has five subunits: alpha(3), beta(3), gamma(1), delta(1), epsilon(1). F(0) has three main subunits: a(1), b(2) and c(10-14). The alpha and beta chains form an alternating ring which encloses part of the gamma chain. F(1) is attached to F(0) by a central stalk formed by the gamma and epsilon chains, while a peripheral stalk is formed by the delta and b chains.

It is found in the cell inner membrane. In terms of biological role, f(1)F(0) ATP synthase produces ATP from ADP in the presence of a proton or sodium gradient. F-type ATPases consist of two structural domains, F(1) containing the extramembraneous catalytic core and F(0) containing the membrane proton channel, linked together by a central stalk and a peripheral stalk. During catalysis, ATP synthesis in the catalytic domain of F(1) is coupled via a rotary mechanism of the central stalk subunits to proton translocation. Its function is as follows. Component of the F(0) channel, it forms part of the peripheral stalk, linking F(1) to F(0). This Pseudoalteromonas translucida (strain TAC 125) protein is ATP synthase subunit b.